The chain runs to 543 residues: Putative pectinesterase/pectinesterase inhibitor 22 (543 aa).

An N-terminal signal peptide occupies residues methionine 1–serine 19. The segment at alanine 38–methionine 197 is pectinesterase inhibitor 22. N-linked (GlcNAc...) asparagine glycosylation is found at asparagine 211 and asparagine 263. A pectinesterase 22 region spans residues asparagine 240–arginine 527. Substrate is bound by residues threonine 315 and glutamine 345. Aspartate 368 acts as the Proton donor; for pectinesterase activity in catalysis. An intrachain disulfide couples cysteine 382 to cysteine 402. Aspartate 389 (nucleophile; for pectinesterase activity) is an active-site residue. The substrate site is built by arginine 448 and tryptophan 450.

The protein in the N-terminal section; belongs to the PMEI family. It in the C-terminal section; belongs to the pectinesterase family.

The protein localises to the secreted. It is found in the cell wall. It catalyses the reaction [(1-&gt;4)-alpha-D-galacturonosyl methyl ester](n) + n H2O = [(1-&gt;4)-alpha-D-galacturonosyl](n) + n methanol + n H(+). Its pathway is glycan metabolism; pectin degradation; 2-dehydro-3-deoxy-D-gluconate from pectin: step 1/5. Acts in the modification of cell walls via demethylesterification of cell wall pectin. This is Putative pectinesterase/pectinesterase inhibitor 22 (PME22) from Arabidopsis thaliana (Mouse-ear cress).